The following is a 217-amino-acid chain: Large ribosomal subunit protein uL1 (217 aa).

Tyrosine 11 bears the Phosphotyrosine mark. N6-acetyllysine occurs at positions 91 and 106. N6-acetyllysine; alternate is present on lysine 118. Lysine 118 participates in a covalent cross-link: Glycyl lysine isopeptide (Lys-Gly) (interchain with G-Cter in SUMO1); alternate. Lysine 118 participates in a covalent cross-link: Glycyl lysine isopeptide (Lys-Gly) (interchain with G-Cter in SUMO2); alternate. A Glycyl lysine isopeptide (Lys-Gly) (interchain with G-Cter in SUMO2) cross-link involves residue lysine 161.

The protein belongs to the universal ribosomal protein uL1 family. As to quaternary structure, component of the large ribosomal subunit.

It is found in the cytoplasm. Functionally, component of the large ribosomal subunit. The ribosome is a large ribonucleoprotein complex responsible for the synthesis of proteins in the cell. The sequence is that of Large ribosomal subunit protein uL1 (RPL10A) from Oryctolagus cuniculus (Rabbit).